Consider the following 791-residue polypeptide: uncharacterized protein (791 aa).

4 helical membrane passes run 104–124 (MWILAFGLATVIAGVDAFFLM), 131–151 (IAAIVALLVAYPLGQLWYYII), 177–197 (ACLYIFVNICVSAKLVNTLII), and 226–246 (WSGLALPILVYPPTLIWPSVL). Asn-265 carries an N-linked (GlcNAc...) asparagine glycan. A run of 8 helical transmembrane segments spans residues 274 to 294 (FFIVFVASFIWYWFPDLIFPA), 309 to 329 (SAVLSQIFGVKTGLGLFPLTL), 346 to 366 (WATCCIFTSFVFWIWIVLPGL), 421 to 441 (FIINIALSLGAFSSMMISFFL), 471 to 491 (VHWGFYLASIIVSLGLGFAFT), 501 to 521 (SYGFVVSMVIGAALYIPLSLI), 533 to 553 (AFFEIVAAFWFNGQPMALLYF), and 583 to 603 (LVAALLFTSGIWSSLVNSAVT). N-linked (GlcNAc...) asparagine glycosylation occurs at Asn-621. 3 helical membrane-spanning segments follow: residues 653 to 673 (FVMWFFLVGAVVSVVVYLLQI), 697 to 717 (SVTGINYSTWAAVAFCFNYLI), and 733 to 753 (AAAMDCGVAIAGLFIYFCVVY). Asn-759 carries an N-linked (GlcNAc...) asparagine glycan.

Belongs to the oligopeptide OPT transporter family.

It localises to the membrane. This is an uncharacterized protein from Schizosaccharomyces pombe (strain 972 / ATCC 24843) (Fission yeast).